Here is a 238-residue protein sequence, read N- to C-terminus: 7-carboxy-7-deazaguanine synthase (238 aa).

Substrate-binding positions include 14 to 16 (IQG) and Arg-29. Residues 20–234 (VVGQKTMFIR…PQLHALVWGN (215 aa)) form the Radical SAM core domain. [4Fe-4S] cluster-binding residues include Cys-33, Cys-37, and Cys-40. Ser-42 contacts Mg(2+). Residue Ser-80 participates in substrate binding. S-adenosyl-L-methionine-binding positions include Gly-82 and 126-128 (SPK).

It belongs to the radical SAM superfamily. 7-carboxy-7-deazaguanine synthase family. Homodimer. [4Fe-4S] cluster is required as a cofactor. Requires S-adenosyl-L-methionine as cofactor. Mg(2+) serves as cofactor.

It carries out the reaction 6-carboxy-5,6,7,8-tetrahydropterin + H(+) = 7-carboxy-7-deazaguanine + NH4(+). Its pathway is purine metabolism; 7-cyano-7-deazaguanine biosynthesis. In terms of biological role, catalyzes the complex heterocyclic radical-mediated conversion of 6-carboxy-5,6,7,8-tetrahydropterin (CPH4) to 7-carboxy-7-deazaguanine (CDG), a step common to the biosynthetic pathways of all 7-deazapurine-containing compounds. This chain is 7-carboxy-7-deazaguanine synthase, found in Bacillus cereus (strain ATCC 14579 / DSM 31 / CCUG 7414 / JCM 2152 / NBRC 15305 / NCIMB 9373 / NCTC 2599 / NRRL B-3711).